A 492-amino-acid polypeptide reads, in one-letter code: Steroid 21-hydroxylase (492 aa).

Residues arginine 91 and lysine 120 each coordinate heme b. Arginine 231 is a 17alpha-hydroxyprogesterone binding site. Progesterone is bound at residue arginine 231. The heme b site is built by histidine 363, arginine 424, and cysteine 426.

This sequence belongs to the cytochrome P450 family. It depends on heme b as a cofactor.

The protein localises to the endoplasmic reticulum membrane. The protein resides in the microsome membrane. The enzyme catalyses 17alpha-hydroxyprogesterone + reduced [NADPH--hemoprotein reductase] + O2 = 11-deoxycortisol + oxidized [NADPH--hemoprotein reductase] + H2O + H(+). It catalyses the reaction progesterone + reduced [NADPH--hemoprotein reductase] + O2 = 21-hydroxyprogesterone + oxidized [NADPH--hemoprotein reductase] + H2O + H(+). Functionally, specifically catalyzes the 21-hydroxylation of steroids. Required for the adrenal synthesis of mineralocorticoids and glucocorticoids. This is Steroid 21-hydroxylase (CYP21) from Felis catus (Cat).